Here is a 418-residue protein sequence, read N- to C-terminus: Serine--tRNA ligase (418 aa).

Thr-232–Glu-234 is an L-serine binding site. Residues Arg-263 to Glu-265 and Val-279 each bind ATP. An L-serine-binding site is contributed by Glu-286. Residue Glu-350 to Ser-353 coordinates ATP. Ser-385 contributes to the L-serine binding site.

The protein belongs to the class-II aminoacyl-tRNA synthetase family. Type-1 seryl-tRNA synthetase subfamily. As to quaternary structure, homodimer. The tRNA molecule binds across the dimer.

It is found in the cytoplasm. The catalysed reaction is tRNA(Ser) + L-serine + ATP = L-seryl-tRNA(Ser) + AMP + diphosphate + H(+). It catalyses the reaction tRNA(Sec) + L-serine + ATP = L-seryl-tRNA(Sec) + AMP + diphosphate + H(+). It functions in the pathway aminoacyl-tRNA biosynthesis; selenocysteinyl-tRNA(Sec) biosynthesis; L-seryl-tRNA(Sec) from L-serine and tRNA(Sec): step 1/1. Its function is as follows. Catalyzes the attachment of serine to tRNA(Ser). Is also able to aminoacylate tRNA(Sec) with serine, to form the misacylated tRNA L-seryl-tRNA(Sec), which will be further converted into selenocysteinyl-tRNA(Sec). In Leptospira biflexa serovar Patoc (strain Patoc 1 / Ames), this protein is Serine--tRNA ligase.